A 251-amino-acid chain; its full sequence is Spermatogenesis-associated protein 46 (251 aa).

The protein resides in the nucleus membrane. In terms of biological role, plays a role in spermiogenesis and fertilization. The polypeptide is Spermatogenesis-associated protein 46 (SPATA46) (Macaca fascicularis (Crab-eating macaque)).